Here is a 225-residue protein sequence, read N- to C-terminus: Cytidylate kinase (225 aa).

Position 12–20 (12–20 (GPSGAGKGT)) interacts with ATP.

This sequence belongs to the cytidylate kinase family. Type 1 subfamily.

It localises to the cytoplasm. It carries out the reaction CMP + ATP = CDP + ADP. It catalyses the reaction dCMP + ATP = dCDP + ADP. The sequence is that of Cytidylate kinase from Proteus mirabilis (strain HI4320).